Consider the following 513-residue polypeptide: Putative thymidine phosphorylase 2 (513 aa).

This sequence belongs to the thymidine/pyrimidine-nucleoside phosphorylase family. Type 2 subfamily.

The catalysed reaction is thymidine + phosphate = 2-deoxy-alpha-D-ribose 1-phosphate + thymine. The chain is Putative thymidine phosphorylase 2 from Acidovorax sp. (strain JS42).